The chain runs to 280 residues: Cytochrome c1 (280 aa).

The first 21 residues, 1–21 (MKKLLISAVSALVLGSGAALA), serve as a signal peptide directing secretion. Cys55, Cys58, His59, and Met205 together coordinate heme c. The chain crosses the membrane as a helical span at residues 249-267 (MGLVAVVMLGLLSVMLYLT).

The main subunits of complex b-c1 are: cytochrome b, cytochrome c1 and the Rieske protein. Binds 1 heme c group covalently per subunit.

The protein localises to the cell membrane. Its function is as follows. Component of the ubiquinol-cytochrome c reductase complex (complex III or cytochrome b-c1 complex), which is a respiratory chain that generates an electrochemical potential coupled to ATP synthesis. c1 functions as an electron donor to cytochrome c. The chain is Cytochrome c1 (petC) from Rhodobacter capsulatus (Rhodopseudomonas capsulata).